Reading from the N-terminus, the 314-residue chain is Olfactory receptor 5P51 (314 aa).

At 1 to 28 (MAFLEDGNHTAVTEFVLFGLTDDPVLRV) the chain is on the extracellular side. The N-linked (GlcNAc...) asparagine glycan is linked to Asn-8. Residues 29–49 (ILFIIFLCIYLVNVSGNLSTI) form a helical membrane-spanning segment. At 50-57 (LLIRVSSQ) the chain is on the cytoplasmic side. A helical membrane pass occupies residues 58–78 (LHHPMYFFLSHLASVDVGYSS). The Extracellular segment spans residues 79–102 (TVTPKMLANFLLERSTISYLGCTI). Cys-100 and Cys-192 are oxidised to a cystine. Residues 103–123 (QLFSGAFVGTLECFLLATMAY) form a helical membrane-spanning segment. At 124-136 (DRFIAICNPLLYS) the chain is on the cytoplasmic side. A helical transmembrane segment spans residues 137–157 (TKMSTQVCIQLLVGSYIGGFL). The Extracellular segment spans residues 158-199 (NASSFLLSFFPLLFCGPNRVNHYSCDLTPLIELSCSGSNVPI). Residues 200–220 (VPASFCSAFVIIVTVSVIAIS) traverse the membrane as a helical segment. The Cytoplasmic segment spans residues 221-240 (YTYILITILKMRSTEGRQKA). A helical membrane pass occupies residues 241 to 261 (FSTCTSHLTAVTLYYGTVTFI). The Extracellular segment spans residues 262–274 (YVMPKSSYSTDQN). Residues 275 to 295 (KVVSVFYTVVIPMLNPIIYSL) form a helical membrane-spanning segment. Over 296-314 (RNNEIKGALKRQLARKIFS) the chain is Cytoplasmic.

Belongs to the G-protein coupled receptor 1 family.

The protein resides in the cell membrane. Its function is as follows. Potential odorant receptor. The sequence is that of Olfactory receptor 5P51 from Mus musculus (Mouse).